Reading from the N-terminus, the 54-residue chain is UPF0391 membrane protein TERTU_3637 (54 aa).

Helical transmembrane passes span 4 to 24 and 29 to 49; these read WALV…TGLA and SIAW…LVAG.

This sequence belongs to the UPF0391 family.

It localises to the cell membrane. The chain is UPF0391 membrane protein TERTU_3637 from Teredinibacter turnerae (strain ATCC 39867 / T7901).